The primary structure comprises 219 residues: Adenylate kinase (219 aa).

12 to 17 is an ATP binding site; that stretch reads GAGKGT. Residues 32-61 form an NMP region; sequence STGDMLRAAVKAGTPIGLQAKAVMDAGELV. Residues Thr-33, Arg-38, 59 to 61, 87 to 90, and Gln-94 each bind AMP; these read ELV and GYPR. The tract at residues 128–165 is LID; that stretch reads GRFSCARCGEGYHDRYKLPKVADICDVCGSKEFKRRPD. Position 129 (Arg-129) interacts with ATP. Zn(2+)-binding residues include Cys-132, Cys-135, Cys-152, and Cys-155. Residues Arg-162 and Arg-174 each contribute to the AMP site. Position 202 (Ala-202) interacts with ATP.

This sequence belongs to the adenylate kinase family. As to quaternary structure, monomer.

The protein resides in the cytoplasm. The catalysed reaction is AMP + ATP = 2 ADP. Its pathway is purine metabolism; AMP biosynthesis via salvage pathway; AMP from ADP: step 1/1. Functionally, catalyzes the reversible transfer of the terminal phosphate group between ATP and AMP. Plays an important role in cellular energy homeostasis and in adenine nucleotide metabolism. This chain is Adenylate kinase, found in Sphingopyxis alaskensis (strain DSM 13593 / LMG 18877 / RB2256) (Sphingomonas alaskensis).